The sequence spans 1004 residues: Presequence protease, mitochondrial (1004 aa).

Residues 1 to 34 (MLRNAAAGARKAVTELSQFPKPGEKLHGFTLVRS) constitute a mitochondrion transit peptide. H84 provides a ligand contact to Zn(2+). E87 (proton acceptor) is an active-site residue. A Zn(2+)-binding site is contributed by H88. The active site involves E160. E188 lines the Zn(2+) pocket.

It belongs to the peptidase M16 family. PreP subfamily. As to quaternary structure, monomer and homodimer; homodimerization is induced by binding of the substrate. The cofactor is Zn(2+).

Its subcellular location is the mitochondrion intermembrane space. The protein localises to the mitochondrion matrix. Functionally, degrades mitochondrial transit peptides after their cleavage in the intermembrane space or in the matrix, and presequence peptides; clearance of these peptides is required to keep the presequence processing machinery running. Preferentially cleaves the N-terminal side of paired basic amino acid residues. Also degrades other unstructured peptides. May function as an ATP-dependent peptidase as opposed to a metalloendopeptidase. The protein is Presequence protease, mitochondrial (CYM1) of Gibberella zeae (strain ATCC MYA-4620 / CBS 123657 / FGSC 9075 / NRRL 31084 / PH-1) (Wheat head blight fungus).